We begin with the raw amino-acid sequence, 172 residues long: MVNFGAQSIRQTLVQLLGFAAIFTSSYMFYKGLSIVANSESPLVVVLSGSMEPAYQRGDVLLLWNRQKHVDVGEVVVYNIDGRTTPIVHRVLRSHASDNKQLLLTKGDNNAVDDVSFYGGRNQYLDREKEVVGVVKGYLPLVGYITILLAENQYFKYGLLGITGLLAFIQGE.

The Cytoplasmic portion of the chain corresponds to 1 to 15 (MVNFGAQSIRQTLVQ). Residues 16-36 (LLGFAAIFTSSYMFYKGLSIV) traverse the membrane as a helical; Signal-anchor for type II membrane protein segment. Over 37–172 (ANSESPLVVV…TGLLAFIQGE (136 aa)) the chain is Lumenal. Catalysis depends on charge relay system residues Ser50, His89, and Asp114. A C-terminal short (CTS) helix region spans residues 158 to 169 (GLLGITGLLAFI).

This sequence belongs to the peptidase S26B family. As to quaternary structure, component of the signal peptidase complex (SPC) composed of a catalytic subunit SEC11 and three accessory subunits SPC1, SPC2 and SPC3. The complex induces a local thinning of the ER membrane which is used to measure the length of the signal peptide (SP) h-region of protein substrates. This ensures the selectivity of the complex towards h-regions shorter than 18-20 amino acids. SPC associates with the translocon complex.

It localises to the endoplasmic reticulum membrane. The enzyme catalyses Cleavage of hydrophobic, N-terminal signal or leader sequences from secreted and periplasmic proteins.. Its function is as follows. Catalytic component of the signal peptidase complex (SPC) which catalyzes the cleavage of N-terminal signal sequences from nascent proteins as they are translocated into the lumen of the endoplasmic reticulum. Specifically cleaves N-terminal signal peptides that contain a hydrophobic alpha-helix (h-region) shorter than 18-20 amino acids. The sequence is that of Signal peptidase complex catalytic subunit SEC11 (SEC11) from Yarrowia lipolytica (strain CLIB 122 / E 150) (Yeast).